We begin with the raw amino-acid sequence, 166 residues long: Lymphocyte antigen 6G6e (166 aa).

The signal sequence occupies residues Met1 to Gly18. Residues Leu28–Leu151 enclose the UPAR/Ly6 domain. 4 disulfides stabilise this stretch: Cys30/Cys52, Cys33/Cys39, Cys110/Cys129, and Cys130/Cys135.

Interacts with CHRNA4. In terms of processing, O-glycosylated. Contains sialic acid residues.

It localises to the cell surface. The protein resides in the cell membrane. Its subcellular location is the cell projection. Believed to act as a modulator of nicotinic acetylcholine receptors (nAChRs) activity. In vitro potentiates alpha-3:beta-4-containing nAChRs maximum response by increasing peak current and slowing down receptor desensitization; the activity is dependent on its cell surface localization. The sequence is that of Lymphocyte antigen 6G6e (Ly6g6e) from Mus musculus (Mouse).